We begin with the raw amino-acid sequence, 290 residues long: Nucleotide-binding protein Xfasm12_0753 (290 aa).

Position 13–20 (13–20) interacts with ATP; sequence GLSGSGKS. A GTP-binding site is contributed by 65–68; that stretch reads DIRS.

The protein belongs to the RapZ-like family.

In terms of biological role, displays ATPase and GTPase activities. The protein is Nucleotide-binding protein Xfasm12_0753 of Xylella fastidiosa (strain M12).